We begin with the raw amino-acid sequence, 215 residues long: Probable glutathione S-transferase GSTF2 (215 aa).

The GST N-terminal domain occupies 2–83; that stretch reads APMKLYGSTL…YVCRKNKPEL (82 aa). Residues S12, 41 to 42, 54 to 55, and 67 to 68 each bind glutathione; these read HK, QV, and ES. Residues 88–215 enclose the GST C-terminal domain; sequence DLKESAMVDV…KVASLMKPPA (128 aa).

The protein belongs to the GST superfamily. Phi family. In terms of tissue distribution, constitutively expressed in roots. Expressed in anthers, callus, panicles, sheaths and stems (at protein level).

It carries out the reaction RX + glutathione = an S-substituted glutathione + a halide anion + H(+). Functionally, conjugation of reduced glutathione to a wide number of exogenous and endogenous hydrophobic electrophiles. The chain is Probable glutathione S-transferase GSTF2 (GSTF2) from Oryza sativa subsp. japonica (Rice).